The primary structure comprises 109 residues: NAD(P)H-quinone oxidoreductase subunit M (109 aa).

This sequence belongs to the complex I NdhM subunit family. As to quaternary structure, NDH-1 can be composed of about 15 different subunits; different subcomplexes with different compositions have been identified which probably have different functions.

Its subcellular location is the cellular thylakoid membrane. It catalyses the reaction a plastoquinone + NADH + (n+1) H(+)(in) = a plastoquinol + NAD(+) + n H(+)(out). The enzyme catalyses a plastoquinone + NADPH + (n+1) H(+)(in) = a plastoquinol + NADP(+) + n H(+)(out). In terms of biological role, NDH-1 shuttles electrons from an unknown electron donor, via FMN and iron-sulfur (Fe-S) centers, to quinones in the respiratory and/or the photosynthetic chain. The immediate electron acceptor for the enzyme in this species is believed to be plastoquinone. Couples the redox reaction to proton translocation, and thus conserves the redox energy in a proton gradient. Cyanobacterial NDH-1 also plays a role in inorganic carbon-concentration. In Microcystis aeruginosa (strain NIES-843 / IAM M-2473), this protein is NAD(P)H-quinone oxidoreductase subunit M.